A 417-amino-acid chain; its full sequence is Gamma-glutamyl phosphate reductase (417 aa).

This sequence belongs to the gamma-glutamyl phosphate reductase family.

The protein localises to the cytoplasm. The catalysed reaction is L-glutamate 5-semialdehyde + phosphate + NADP(+) = L-glutamyl 5-phosphate + NADPH + H(+). It functions in the pathway amino-acid biosynthesis; L-proline biosynthesis; L-glutamate 5-semialdehyde from L-glutamate: step 2/2. In terms of biological role, catalyzes the NADPH-dependent reduction of L-glutamate 5-phosphate into L-glutamate 5-semialdehyde and phosphate. The product spontaneously undergoes cyclization to form 1-pyrroline-5-carboxylate. This Haemophilus influenzae (strain ATCC 51907 / DSM 11121 / KW20 / Rd) protein is Gamma-glutamyl phosphate reductase.